The following is a 67-amino-acid chain: Large ribosomal subunit protein bL35 (67 aa).

Residues 1–16 (MPKMKTKSSAKKRFRV) are compositionally biased toward basic residues. Residues 1–24 (MPKMKTKSSAKKRFRVRPGGTVKR) are disordered.

The protein belongs to the bacterial ribosomal protein bL35 family.

The sequence is that of Large ribosomal subunit protein bL35 from Verminephrobacter eiseniae (strain EF01-2).